A 37-amino-acid chain; its full sequence is Large ribosomal subunit protein bL36 (37 aa).

Belongs to the bacterial ribosomal protein bL36 family.

The protein is Large ribosomal subunit protein bL36 of Alkaliphilus oremlandii (strain OhILAs) (Clostridium oremlandii (strain OhILAs)).